A 335-amino-acid chain; its full sequence is Glyceraldehyde-3-phosphate dehydrogenase (335 aa).

NAD(+)-binding positions include 10 to 11 (RI), Asp33, Arg77, and Ser119. D-glyceraldehyde 3-phosphate contacts are provided by residues 150–152 (SCT), Thr181, 210–211 (TG), and Arg233. The active-site Nucleophile is the Cys151. Residue Asn315 coordinates NAD(+).

This sequence belongs to the glyceraldehyde-3-phosphate dehydrogenase family. As to quaternary structure, homotetramer.

The protein resides in the cytoplasm. The catalysed reaction is D-glyceraldehyde 3-phosphate + phosphate + NAD(+) = (2R)-3-phospho-glyceroyl phosphate + NADH + H(+). The protein operates within carbohydrate degradation; glycolysis; pyruvate from D-glyceraldehyde 3-phosphate: step 1/5. Functionally, catalyzes the oxidative phosphorylation of glyceraldehyde 3-phosphate (G3P) to 1,3-bisphosphoglycerate (BPG) using the cofactor NAD. The first reaction step involves the formation of a hemiacetal intermediate between G3P and a cysteine residue, and this hemiacetal intermediate is then oxidized to a thioester, with concomitant reduction of NAD to NADH. The reduced NADH is then exchanged with the second NAD, and the thioester is attacked by a nucleophilic inorganic phosphate to produce BPG. This chain is Glyceraldehyde-3-phosphate dehydrogenase (gap), found in Chlamydia pneumoniae (Chlamydophila pneumoniae).